Reading from the N-terminus, the 253-residue chain is Snake venom serine proteinase 14 (253 aa).

The signal sequence occupies residues 1–18; it reads MVLIRVLANLLILQLSYA. Residues 19–24 constitute a propeptide that is removed on maturation; the sequence is QKSSEL. Residues 25–244 enclose the Peptidase S1 domain; it reads VIGGDECNIN…YTDWIQSIIA (220 aa). Cystine bridges form between Cys-31-Cys-158, Cys-49-Cys-65, Cys-93-Cys-251, Cys-137-Cys-205, Cys-169-Cys-184, and Cys-195-Cys-220. Catalysis depends on charge relay system residues His-64 and Asp-105. 3 N-linked (GlcNAc...) asparagine glycosylation sites follow: Asn-116, Asn-117, and Asn-149. Ser-199 acts as the Charge relay system in catalysis.

Belongs to the peptidase S1 family. Snake venom subfamily. Monomer. As to expression, expressed by the venom gland.

The protein localises to the secreted. Functionally, snake venom serine protease that may act in the hemostasis system of the prey. The sequence is that of Snake venom serine proteinase 14 from Crotalus adamanteus (Eastern diamondback rattlesnake).